Here is a 1108-residue protein sequence, read N- to C-terminus: cGMP-inhibited 3',5'-cyclic phosphodiesterase 3B (1108 aa).

Over residues 1-11 (MRKDERERDTP) the composition is skewed to basic and acidic residues. Residues 1–32 (MRKDERERDTPAMRSPPPPPPPATATAASPPE) are disordered. The tract at residues 1-32 (MRKDERERDTPAMRSPPPPPPPATATAASPPE) is interaction with RAPGEF3. Pro residues predominate over residues 14-23 (RSPPPPPPPA). A Phosphoserine modification is found at S15. The next 6 membrane-spanning stretches (helical) occupy residues 73–93 (AGARLSLAALAAFVLAALLGA), 114–134 (LSLSPLFSIACAFFFLTCFLT), 144–164 (AGSWWLLALPACCYLGDFAAW), 175–195 (AAAAAGRLCLVLSCVGLLTLA), 204–224 (VLVLLFAGLVWWVSFSGLGAL), and 231–251 (LLSCLVGGAGCLLALGLDHFF). A Phosphoserine; by PKB/AKT1 or PKB/AKT2 modification is found at S279. Phosphoserine occurs at positions 280 and 427. The tract at residues 405 to 448 (DRKLHKGLSSKPSFPTAQLRRSSGASGLLTSEHHSRWDRSGGKR) is disordered. Residues 414–433 (SKPSFPTAQLRRSSGASGLL) show a composition bias toward polar residues. The interval 421 to 445 (AQLRRSSGASGLLTSEHHSRWDRSG) is interaction with PIK3R6. Residues 435–445 (SEHHSRWDRSG) show a composition bias toward basic and acidic residues. The PDEase domain occupies 633-1070 (PNIDQEVLLD…KIWKEIIEEE (438 aa)). H719 (proton donor) is an active-site residue. H719 lines the AMP pocket. Residues H723, H803, D804, and D919 each coordinate Mg(2+). Positions 804, 919, and 970 each coordinate AMP. A compositionally biased stretch (acidic residues) spans 999-1033 (EEGDDTESDDDDDDDDDDDDDDDEELDSDDEETED). The disordered stretch occupies residues 999-1042 (EEGDDTESDDDDDDDDDDDDDDDEELDSDDEETEDNLNPKPQRR).

This sequence belongs to the cyclic nucleotide phosphodiesterase family. PDE3 subfamily. Homodimer. Interacts with PIK3CG; regulates PDE3B activity and thereby cAMP levels in cells. Interacts with RAPGEF3 and PIK3R6; form a signaling complex that regulates phosphatidylinositol 3-kinase gamma in angiogenesis. Interacts with ABHD15; this interaction regulates PDE3B's stability and expression and, thereby, impacts the antilipolytic action of insulin. Mg(2+) serves as cofactor. Requires Mn(2+) as cofactor. In terms of processing, phosphorylation at Ser-279 mediates insulin-induced activation of PDE3B. Abundant in adipose tissues.

The protein localises to the membrane. The enzyme catalyses a nucleoside 3',5'-cyclic phosphate + H2O = a nucleoside 5'-phosphate + H(+). It carries out the reaction 3',5'-cyclic AMP + H2O = AMP + H(+). It catalyses the reaction 3',5'-cyclic GMP + H2O = GMP + H(+). Inhibited by cGMP. Cyclic nucleotide phosphodiesterase with a dual-specificity for the second messengers cAMP and cGMP, which are key regulators of many important physiological processes. Regulates angiogenesis by inhibiting the cAMP-dependent guanine nucleotide exchange factor RAPGEF3 and downstream phosphatidylinositol 3-kinase gamma-mediated signaling. Controls cardiac contractility by reducing cAMP concentration in cardiocytes. The chain is cGMP-inhibited 3',5'-cyclic phosphodiesterase 3B from Rattus norvegicus (Rat).